Reading from the N-terminus, the 623-residue chain is Interferon-induced GTP-binding protein Mx3 (623 aa).

Residues 31 to 304 (DLALPAIAVI…LVHHIEKSLP (274 aa)) enclose the Dynamin-type G domain. The interval 41–48 (GDQSSGKS) is G1 motif. 41–48 (GDQSSGKS) provides a ligand contact to GTP. Residues 66 to 68 (VTR) form a G2 motif region. Residues 142–145 (DLPG) are G3 motif. Residues 142–146 (DLPGI) and 211–214 (TKPD) contribute to the GTP site. Residues 211–214 (TKPD) form a G4 motif region. The interval 243–246 (KCRG) is G5 motif. Residues 537-623 (LQEMMLHLKS…MKARSYLVEF (87 aa)) enclose the GED domain.

Belongs to the TRAFAC class dynamin-like GTPase superfamily. Dynamin/Fzo/YdjA family.

The protein localises to the cytoplasm. Does not inhibit strain RB-1 of the fish pathogen, infectious hematopoietic necrosis virus (IHNV). The protein is Interferon-induced GTP-binding protein Mx3 of Oncorhynchus mykiss (Rainbow trout).